Consider the following 65-residue polypeptide: DNA-directed RNA polymerase subunit omega (65 aa).

This sequence belongs to the RNA polymerase subunit omega family. As to quaternary structure, the RNAP catalytic core consists of 2 alpha, 1 beta, 1 beta' and 1 omega subunit. When a sigma factor is associated with the core the holoenzyme is formed, which can initiate transcription.

It carries out the reaction RNA(n) + a ribonucleoside 5'-triphosphate = RNA(n+1) + diphosphate. Its function is as follows. Promotes RNA polymerase assembly. Latches the N- and C-terminal regions of the beta' subunit thereby facilitating its interaction with the beta and alpha subunits. The sequence is that of DNA-directed RNA polymerase subunit omega from Baumannia cicadellinicola subsp. Homalodisca coagulata.